Reading from the N-terminus, the 366-residue chain is Aminomethyltransferase (366 aa).

It belongs to the GcvT family. In terms of assembly, the glycine cleavage system is composed of four proteins: P, T, L and H.

The enzyme catalyses N(6)-[(R)-S(8)-aminomethyldihydrolipoyl]-L-lysyl-[protein] + (6S)-5,6,7,8-tetrahydrofolate = N(6)-[(R)-dihydrolipoyl]-L-lysyl-[protein] + (6R)-5,10-methylene-5,6,7,8-tetrahydrofolate + NH4(+). Functionally, the glycine cleavage system catalyzes the degradation of glycine. The polypeptide is Aminomethyltransferase (Bacillus velezensis (strain DSM 23117 / BGSC 10A6 / LMG 26770 / FZB42) (Bacillus amyloliquefaciens subsp. plantarum)).